A 110-amino-acid polypeptide reads, in one-letter code: Keratin, type I cytoskeletal 19 (110 aa).

The tract at residues 1-8 is head; the sequence is FGSGGVFR. Serine 3 carries the post-translational modification Phosphoserine. Positions 7-110 constitute an IF rod domain; it reads FRITMQNLND…KLEQEIATYR (104 aa). An Omega-N-methylarginine modification is found at arginine 8. The segment at 9–42 is coil 1A; it reads ITMQNLNDRLASYLDKVRALEQANGELEVKIRDW. The linker 1 stretch occupies residues 43–45; the sequence is YQK. The coil 1B stretch occupies residues 46 to 83; it reads IVLQIDNARTKFETEQALRVLDELTLARKNHEEEISAL. The interval 85–110 is coil 2; that stretch reads ADTERQNQEYQQLMDIKLEQEIATYR. The tract at residues 85-110 is necessary for interaction with PNN; it reads ADTERQNQEYQQLMDIKLEQEIATYR.

This sequence belongs to the intermediate filament family. In terms of assembly, heterotetramer of two type I and two type II keratins. Interacts with PNN and the actin-binding domain of DMD.

Functionally, involved in the organization of myofibers. Together with KRT8, helps to link the contractile apparatus to dystrophin at the costameres of striated muscle. This Mesocricetus auratus (Golden hamster) protein is Keratin, type I cytoskeletal 19.